The primary structure comprises 367 residues: Phospho-N-acetylmuramoyl-pentapeptide-transferase (367 aa).

10 helical membrane-spanning segments follow: residues 13–33 (ISGI…ALTL), 49–69 (LPLL…VPLL), 95–115 (MGGI…SNFA), 119–139 (LAVS…DWQI), 154–174 (LALQ…NQPA), 183–203 (WVSF…FVLV), 215–235 (IDGL…AIVA), 237–257 (TSPA…GFLA), 281–301 (AVAL…IFFV), and 347–367 (VSSF…IAPF).

This sequence belongs to the glycosyltransferase 4 family. MraY subfamily. Requires Mg(2+) as cofactor.

It localises to the cell inner membrane. It carries out the reaction UDP-N-acetyl-alpha-D-muramoyl-L-alanyl-gamma-D-glutamyl-meso-2,6-diaminopimeloyl-D-alanyl-D-alanine + di-trans,octa-cis-undecaprenyl phosphate = di-trans,octa-cis-undecaprenyl diphospho-N-acetyl-alpha-D-muramoyl-L-alanyl-D-glutamyl-meso-2,6-diaminopimeloyl-D-alanyl-D-alanine + UMP. It participates in cell wall biogenesis; peptidoglycan biosynthesis. Its function is as follows. Catalyzes the initial step of the lipid cycle reactions in the biosynthesis of the cell wall peptidoglycan: transfers peptidoglycan precursor phospho-MurNAc-pentapeptide from UDP-MurNAc-pentapeptide onto the lipid carrier undecaprenyl phosphate, yielding undecaprenyl-pyrophosphoryl-MurNAc-pentapeptide, known as lipid I. In Trichormus variabilis (strain ATCC 29413 / PCC 7937) (Anabaena variabilis), this protein is Phospho-N-acetylmuramoyl-pentapeptide-transferase.